The following is a 506-amino-acid chain: Notoamide biosynthesis cluster transcriptional coactivator notQ' (506 aa).

Residues 11–38 (CLVCRHRKVACDRGRPQCGLCRKNGFDC) constitute a DNA-binding region (zn(2)-C6 fungal-type). Residues 73–102 (GRLSQSQPSQPATERDDLATTPSTGRLAPP) are disordered. The span at 75–84 (LSQSQPSQPA) shows a compositional bias: polar residues.

It localises to the nucleus. Functionally, transcription factor that probably regulates the expression of the gene cluster that mediates the biosynthesis of notoamide, a fungal indole alkaloid that belongs to a family of natural products containing a characteristic bicyclo[2.2.2]diazaoctane core. This is Notoamide biosynthesis cluster transcriptional coactivator notQ' from Aspergillus versicolor.